Consider the following 72-residue polypeptide: uncharacterized protein (72 aa).

This is an uncharacterized protein from Escherichia coli (strain K12).